A 1757-amino-acid polypeptide reads, in one-letter code: 1-phosphatidylinositol-3-phosphate 5-kinase FAB1A (1757 aa).

The FYVE-type zinc finger occupies 36–102 (DQSCPVCYEC…VCNYCYKQWE (67 aa)). Positions 42, 45, 58, 61, 66, 69, 94, and 97 each coordinate Zn(2+). Disordered regions lie at residues 125 to 193 (ARSV…SDNQ), 276 to 297 (KTRQ…CEES), 313 to 346 (LPPE…YLRP), and 684 to 709 (AEKS…NFTS). Polar residues predominate over residues 134-145 (NSSNCTIDSTAG). The segment covering 317–337 (PENEEDEREAVLSDDDGDEGD) has biased composition (acidic residues). Residues 1014–1087 (LQKESKEVIK…LQQMLNVVKD (74 aa)) adopt a coiled-coil conformation. A PIPK domain is found at 1395 to 1719 (SFSLFDSVNL…RFRKAMTAYF (325 aa)). The segment covering 1729 to 1739 (AAVVPSNSSSA) has biased composition (low complexity). Residues 1729-1757 (AAVVPSNSSSAEVKEEEEKDNPQAVGNKS) are disordered.

In terms of assembly, component of the PI(3,5)P2 regulatory complex at least composed of ATG18, SAC/FIG4, FAB1 and VAC14. Requires Mg(2+) as cofactor. It depends on Mn(2+) as a cofactor. Ubiquitous with highest expression levels in pollen, seed, and senescent leaves.

It localises to the endosome membrane. It carries out the reaction a 1,2-diacyl-sn-glycero-3-phospho-(1D-myo-inositol-3-phosphate) + ATP = a 1,2-diacyl-sn-glycero-3-phospho-(1D-myo-inositol-3,5-bisphosphate) + ADP + H(+). The PI(3,5)P2 regulatory complex regulates both the synthesis and turnover of phosphatidylinositol 3,5-bisphosphate (PtdIns(3,5)P2). Catalyzes the phosphorylation of phosphatidylinositol 3-phosphate on the fifth hydroxyl of the myo-inositol ring, to form phosphatidylinositol 3,5-bisphosphate. Plays an important role in maintenance of endomembrane homeostasis including endocytosis, vacuole formation, and vacuolar acidification processes. Required for development of viable pollen. Might mediate recycling of auxin transporters. In Arabidopsis thaliana (Mouse-ear cress), this protein is 1-phosphatidylinositol-3-phosphate 5-kinase FAB1A (FAB1A).